The chain runs to 963 residues: Trehalose synthase (963 aa).

D60 serves as a coordination point for substrate. Residue N100 coordinates Ca(2+). H101 and Q165 together coordinate substrate. D167 is a binding site for Ca(2+). A substrate-binding site is contributed by R195. D197 acts as the Nucleophile in catalysis. The Ca(2+) site is built by Y201, L202, and E204. Catalysis depends on E240, which acts as the Proton donor. Positions 305 and 306 each coordinate substrate.

It belongs to the glycosyl hydrolase 13 family. TreS subfamily.

The catalysed reaction is D-maltose = alpha,alpha-trehalose. In terms of biological role, catalyzes the reversible interconversion of maltose and alpha,alpha-trehalose by transglucosylation. The chain is Trehalose synthase (treS) from Thermus thermophilus.